Consider the following 617-residue polypeptide: Proline--tRNA ligase (617 aa).

Belongs to the class-II aminoacyl-tRNA synthetase family. ProS type 1 subfamily. As to quaternary structure, homodimer.

The protein resides in the cytoplasm. The enzyme catalyses tRNA(Pro) + L-proline + ATP = L-prolyl-tRNA(Pro) + AMP + diphosphate. In terms of biological role, catalyzes the attachment of proline to tRNA(Pro) in a two-step reaction: proline is first activated by ATP to form Pro-AMP and then transferred to the acceptor end of tRNA(Pro). As ProRS can inadvertently accommodate and process non-cognate amino acids such as alanine and cysteine, to avoid such errors it has two additional distinct editing activities against alanine. One activity is designated as 'pretransfer' editing and involves the tRNA(Pro)-independent hydrolysis of activated Ala-AMP. The other activity is designated 'posttransfer' editing and involves deacylation of mischarged Ala-tRNA(Pro). The misacylated Cys-tRNA(Pro) is not edited by ProRS. This Treponema pallidum (strain Nichols) protein is Proline--tRNA ligase.